The following is a 122-amino-acid chain: Large ribosomal subunit protein uL14 (122 aa).

This sequence belongs to the universal ribosomal protein uL14 family. Part of the 50S ribosomal subunit. Forms a cluster with proteins L3 and L19. In the 70S ribosome, L14 and L19 interact and together make contacts with the 16S rRNA in bridges B5 and B8.

Its function is as follows. Binds to 23S rRNA. Forms part of two intersubunit bridges in the 70S ribosome. The sequence is that of Large ribosomal subunit protein uL14 from Leifsonia xyli subsp. xyli (strain CTCB07).